Consider the following 219-residue polypeptide: Ribose-5-phosphate isomerase A (219 aa).

Residues 28–31 (TGST), 81–84 (DGAD), and 94–97 (KGGG) each bind substrate. Catalysis depends on Glu-103, which acts as the Proton acceptor. Position 121 (Lys-121) interacts with substrate.

This sequence belongs to the ribose 5-phosphate isomerase family. In terms of assembly, homodimer.

It carries out the reaction aldehydo-D-ribose 5-phosphate = D-ribulose 5-phosphate. It participates in carbohydrate degradation; pentose phosphate pathway; D-ribose 5-phosphate from D-ribulose 5-phosphate (non-oxidative stage): step 1/1. In terms of biological role, catalyzes the reversible conversion of ribose-5-phosphate to ribulose 5-phosphate. This Nitrosomonas europaea (strain ATCC 19718 / CIP 103999 / KCTC 2705 / NBRC 14298) protein is Ribose-5-phosphate isomerase A.